The primary structure comprises 196 residues: Small ribosomal subunit protein uS4c (196 aa).

One can recognise an S4 RNA-binding domain in the interval 89-149 (MRLDNILFRL…DKQRSKALIQ (61 aa)).

Belongs to the universal ribosomal protein uS4 family. Part of the 30S ribosomal subunit. Contacts protein S5. The interaction surface between S4 and S5 is involved in control of translational fidelity.

The protein resides in the plastid. The protein localises to the chloroplast. Its function is as follows. One of the primary rRNA binding proteins, it binds directly to 16S rRNA where it nucleates assembly of the body of the 30S subunit. With S5 and S12 plays an important role in translational accuracy. The chain is Small ribosomal subunit protein uS4c (rps4) from Asparagus maritimus (Sea asparagus).